The chain runs to 138 residues: Acidic phospholipase A2 homolog sistruxin A (138 aa).

The first 37 residues, 1–37, serve as a signal peptide directing secretion; it reads MRALWIVAVLLLGVEGSLVEFETLIMKIAGRSGVWYY. Intrachain disulfides connect Cys42-Cys131, Cys44-Cys60, Cys59-Cys111, Cys65-Cys138, Cys66-Cys104, Cys73-Cys97, and Cys91-Cys102. A propeptide spanning residues 78 to 83 is cleaved from the precursor; the sequence is DVYTYR. Gln84 bears the Pyrrolidone carboxylic acid mark. The propeptide occupies 119 to 124; that stretch reads YNHKYW.

Belongs to the phospholipase A2 family. Group II subfamily. D49 sub-subfamily. As to quaternary structure, heterodimer of an acidic subunit and a basic chain. The acidic subunit is non-toxic, without enzymatic activity and comprises 3 peptides that are cross-linked by 7 disulfide bridges. The basic subunit is toxic, has phospholipase A2 activity and is composed of a single chain. Expressed by the venom gland.

It localises to the secreted. Its function is as follows. Snake venom phospholipase A2 (PLA2) that inhibits neuromuscular transmission by blocking acetylcholine release from the nerve termini. The chain is Acidic phospholipase A2 homolog sistruxin A from Sistrurus tergeminus (Western massasauga).